The sequence spans 357 residues: 3-dehydroquinate synthase (357 aa).

NAD(+) is bound by residues 99-103 (GATGD), 123-124 (TT), lysine 135, lysine 144, and 162-165 (FLET). The Zn(2+) site is built by glutamate 177, histidine 247, and histidine 261.

Belongs to the sugar phosphate cyclases superfamily. Dehydroquinate synthase family. The cofactor is Co(2+). Zn(2+) serves as cofactor. NAD(+) is required as a cofactor.

It is found in the cytoplasm. The catalysed reaction is 7-phospho-2-dehydro-3-deoxy-D-arabino-heptonate = 3-dehydroquinate + phosphate. The protein operates within metabolic intermediate biosynthesis; chorismate biosynthesis; chorismate from D-erythrose 4-phosphate and phosphoenolpyruvate: step 2/7. Its function is as follows. Catalyzes the conversion of 3-deoxy-D-arabino-heptulosonate 7-phosphate (DAHP) to dehydroquinate (DHQ). This chain is 3-dehydroquinate synthase, found in Macrococcus caseolyticus (strain JCSC5402) (Macrococcoides caseolyticum).